The primary structure comprises 408 residues: Phosphopentomutase (408 aa).

Mn(2+) contacts are provided by D10, D307, H312, D348, H349, and H360.

Belongs to the phosphopentomutase family. The cofactor is Mn(2+).

The protein localises to the cytoplasm. It catalyses the reaction 2-deoxy-alpha-D-ribose 1-phosphate = 2-deoxy-D-ribose 5-phosphate. The catalysed reaction is alpha-D-ribose 1-phosphate = D-ribose 5-phosphate. Its pathway is carbohydrate degradation; 2-deoxy-D-ribose 1-phosphate degradation; D-glyceraldehyde 3-phosphate and acetaldehyde from 2-deoxy-alpha-D-ribose 1-phosphate: step 1/2. Isomerase that catalyzes the conversion of deoxy-ribose 1-phosphate (dRib-1-P) and ribose 1-phosphate (Rib-1-P) to deoxy-ribose 5-phosphate (dRib-5-P) and ribose 5-phosphate (Rib-5-P), respectively. This Proteus mirabilis (strain HI4320) protein is Phosphopentomutase.